The sequence spans 906 residues: Coatomer subunit beta' (906 aa).

WD repeat units follow at residues 13–52, 55–94, 97–136, 140–180, 183–224, 227–266, 350–388, and 390–425; these read ARSD…LVKT, VCDL…RVHM, AHSD…SCSQ, GHTH…PNFT, GHEK…CVQT, GHAQ…LEST, SCEI…NKSF, and SAQE…KSFK. At Lys-627 the chain carries N6-acetyllysine. Residues 746-783 form a WD 9 repeat; sequence IRTGRLPEAAFLARTYLPSQVSRVVKLWRENLSKVNQK. The segment at 837 to 872 is disordered; that stretch reads EEAKGFQPSRSAAQQELDGKPASPTPVIVTSQTANK. Phosphoserine is present on Ser-859. Residue Thr-861 is modified to Phosphothreonine. The stretch at 866 to 891 forms a coiled coil; the sequence is TSQTANKEEKSLLELEVDLDNLEIED.

It belongs to the WD repeat COPB2 family. As to quaternary structure, oligomeric complex that consists of at least the alpha, beta, beta', gamma, delta, epsilon and zeta subunits. Probably interacts with PEX11A. Interacts with SCYL1. Interacts with JAGN1.

It localises to the cytoplasm. The protein localises to the cytosol. It is found in the golgi apparatus membrane. Its subcellular location is the cytoplasmic vesicle. The protein resides in the COPI-coated vesicle membrane. Its function is as follows. The coatomer is a cytosolic protein complex that binds to dilysine motifs and reversibly associates with Golgi non-clathrin-coated vesicles, which further mediate biosynthetic protein transport from the ER, via the Golgi up to the trans Golgi network. Coatomer complex is required for budding from Golgi membranes, and is essential for the retrograde Golgi-to-ER transport of dilysine-tagged proteins. In mammals, the coatomer can only be recruited by membranes associated to ADP-ribosylation factors (ARFs), which are small GTP-binding proteins; the complex also influences the Golgi structural integrity, as well as the processing, activity, and endocytic recycling of LDL receptors. In terms of biological role, this coatomer complex protein, essential for Golgi budding and vesicular trafficking, is a selective binding protein (RACK) for protein kinase C, epsilon type. It binds to Golgi membranes in a GTP-dependent manner. In Bos taurus (Bovine), this protein is Coatomer subunit beta' (COPB2).